The primary structure comprises 274 residues: Sulfur carrier protein FdhD (274 aa).

The Cysteine persulfide intermediate role is filled by C121. 258–263 serves as a coordination point for Mo-bis(molybdopterin guanine dinucleotide); sequence FSKPGR.

The protein belongs to the FdhD family.

The protein resides in the cytoplasm. Its function is as follows. Required for formate dehydrogenase (FDH) activity. Acts as a sulfur carrier protein that transfers sulfur from IscS to the molybdenum cofactor prior to its insertion into FDH. The chain is Sulfur carrier protein FdhD from Yersinia pseudotuberculosis serotype O:3 (strain YPIII).